The sequence spans 104 residues: Large ribosomal subunit protein uL24 (104 aa).

The protein belongs to the universal ribosomal protein uL24 family. As to quaternary structure, part of the 50S ribosomal subunit.

In terms of biological role, one of two assembly initiator proteins, it binds directly to the 5'-end of the 23S rRNA, where it nucleates assembly of the 50S subunit. Its function is as follows. One of the proteins that surrounds the polypeptide exit tunnel on the outside of the subunit. This chain is Large ribosomal subunit protein uL24, found in Yersinia pseudotuberculosis serotype O:1b (strain IP 31758).